The following is a 248-amino-acid chain: Cobalt transport protein CbiM (248 aa).

A signal peptide spans 1–29 (MKRVSVKNYLVCLLIAVCAIFVFPANASA). 6 helical membrane-spanning segments follow: residues 40 to 60 (GWCI…FFSI), 72 to 92 (TLLA…MPSV), 104 to 124 (LGAV…ILLF), 136 to 156 (TLGA…FGVF), 167 to 187 (GLAV…ITSV), and 210 to 230 (IFGF…VVIY).

This sequence belongs to the CbiM family. Forms an energy-coupling factor (ECF) transporter complex composed of an ATP-binding protein (A component, CbiO), a transmembrane protein (T component, CbiQ) and 2 possible substrate-capture proteins (S components, CbiM and CbiN) of unknown stoichimetry.

It is found in the cell membrane. It functions in the pathway cofactor biosynthesis; adenosylcobalamin biosynthesis. Its function is as follows. Part of the energy-coupling factor (ECF) transporter complex CbiMNOQ involved in cobalt import. This chain is Cobalt transport protein CbiM, found in Ruminiclostridium cellulolyticum (strain ATCC 35319 / DSM 5812 / JCM 6584 / H10) (Clostridium cellulolyticum).